The sequence spans 67 residues: ATP synthase F(0) complex subunit 8 (67 aa).

The chain crosses the membrane as a helical span at residues 8–24 (TWFINIVSMILTLFIVF). Lysine 54 is modified (N6-acetyllysine; alternate). Lysine 54 is subject to N6-succinyllysine; alternate. The residue at position 57 (lysine 57) is an N6-acetyllysine.

This sequence belongs to the ATPase protein 8 family. Component of the ATP synthase complex composed at least of ATP5F1A/subunit alpha, ATP5F1B/subunit beta, ATP5MC1/subunit c (homooctomer), MT-ATP6/subunit a, MT-ATP8/subunit 8, ATP5ME/subunit e, ATP5MF/subunit f, ATP5MG/subunit g, ATP5MK/subunit k, ATP5MJ/subunit j, ATP5F1C/subunit gamma, ATP5F1D/subunit delta, ATP5F1E/subunit epsilon, ATP5PF/subunit F6, ATP5PB/subunit b, ATP5PD/subunit d, ATP5PO/subunit OSCP. ATP synthase complex consists of a soluble F(1) head domain (subunits alpha(3) and beta(3)) - the catalytic core - and a membrane F(0) domain - the membrane proton channel (subunits c, a, 8, e, f, g, k and j). These two domains are linked by a central stalk (subunits gamma, delta, and epsilon) rotating inside the F1 region and a stationary peripheral stalk (subunits F6, b, d, and OSCP). Interacts with PRICKLE3.

It is found in the mitochondrion membrane. Its function is as follows. Subunit 8, of the mitochondrial membrane ATP synthase complex (F(1)F(0) ATP synthase or Complex V) that produces ATP from ADP in the presence of a proton gradient across the membrane which is generated by electron transport complexes of the respiratory chain. ATP synthase complex consist of a soluble F(1) head domain - the catalytic core - and a membrane F(1) domain - the membrane proton channel. These two domains are linked by a central stalk rotating inside the F(1) region and a stationary peripheral stalk. During catalysis, ATP synthesis in the catalytic domain of F(1) is coupled via a rotary mechanism of the central stalk subunits to proton translocation. In vivo, can only synthesize ATP although its ATP hydrolase activity can be activated artificially in vitro. Part of the complex F(0) domain. In Equus caballus (Horse), this protein is ATP synthase F(0) complex subunit 8.